The sequence spans 328 residues: MDTKMEDVGKTPEPIRFQTTTEPASISTLDGWIENLMACKQLPEVDVLRLCEKAREVLHSESNVQPVKCPVTVCGDIHGQFHDLMELFRIGGPNPDTNYLFMGDYVDRGYYSVETVTLLVALKIRYPQRITILRGNHESRQITQVYGFYDECLRKYGNANVWKYFTNLFDFLPLTALIENQIFCLHGGLSPSIDTLDNIKSLDRIQEVPHEGPMCDLLWSDPDDRCGWGISPRGAGYTFGQDISEAFNHNNGLTLVARAHQLVMEGYNWSQDRNVVTIFSAPNYCYRCGNQAAIMEIDEHLKYTFLQFDPCPRAGEPMVTRRTPDYFL.

Mn(2+) is bound by residues Asp-76, His-78, Asp-104, and Asn-136. The Proton donor role is filled by His-137. Residues His-186 and His-260 each contribute to the Mn(2+) site. Position 328 is a leucine methyl ester (Leu-328).

Belongs to the PPP phosphatase family. PP-2A subfamily. The cofactor is Mn(2+).

The enzyme catalyses O-phospho-L-seryl-[protein] + H2O = L-seryl-[protein] + phosphate. It carries out the reaction O-phospho-L-threonyl-[protein] + H2O = L-threonyl-[protein] + phosphate. The chain is Serine/threonine-protein phosphatase PP2A-2 catalytic subunit (PP2A-2) from Blumeria hordei (Barley powdery mildew).